An 804-amino-acid chain; its full sequence is Tubulin polyglutamylase TTLL13 (804 aa).

Residues 1 to 41 (MEPNNCKTSESEEDDIEEEESEEECVREESTTPNSTQQALR) are disordered. Positions 4–30 (NNCKTSESEEDDIEEEESEEECVREES) form a coiled coil. Acidic residues predominate over residues 11-26 (SEEDDIEEEESEEECV). In terms of domain architecture, TTL spans 85 to 430 (RRPLAINLTN…RGCDKKKVIE (346 aa)). ATP contacts are provided by residues Lys-202, 208 to 209 (QG), 230 to 233 (QQYI), and 243 to 245 (KFD). Residue Gln-208 participates in a protein binding. Arg-269 is an L-glutamate binding site. Residue 291–292 (TN) coordinates ATP. The L-glutamate site is built by Tyr-293 and Lys-311. Positions 376, 389, and 391 each coordinate Mg(2+). A protein is bound at residue His-392. The c-MTBD region stretch occupies residues 401-482 (RLDREVKDAL…LGGYRRIYPG (82 aa)). Lys-407 is a binding site for L-glutamate. Coiled coils occupy residues 504 to 541 (ASKA…KEQN) and 585 to 609 (QDIV…IRSL). The segment at 519 to 556 (IRLKQEQQENPGTKKRKENKEQNQGESAGEKSRSRTAT) is disordered. Residues 536-551 (ENKEQNQGESAGEKSR) are compositionally biased toward basic and acidic residues.

It belongs to the tubulin--tyrosine ligase family. It depends on Mg(2+) as a cofactor. As to expression, highly expressed in heart and testis. Expressed in brain, kidney, liver, lung, muscle and trachea. In the brain, expressed in ependymal cilia, cortex, corpus callosum and striatum.

It catalyses the reaction (L-glutamyl)(n)-gamma-L-glutamyl-L-glutamyl-[protein] + L-glutamate + ATP = (L-glutamyl)(n+1)-gamma-L-glutamyl-L-glutamyl-[protein] + ADP + phosphate + H(+). In terms of biological role, polyglutamylase which modifies tubulin, generating polyglutamate side chains of variable lengths on the gamma-carboxyl group of specific glutamate residues within the C-terminal tail of tubulin. Mediates ATP-dependent polyglutamate side-chain elongation of the polyglutamylation reaction but not the initiation step. Preferentially modifies the alpha-tubulin tail over a beta-tail. In Mus musculus (Mouse), this protein is Tubulin polyglutamylase TTLL13.